A 215-amino-acid chain; its full sequence is Orotate phosphoribosyltransferase (215 aa).

Position 26 (Lys26) interacts with 5-phospho-alpha-D-ribose 1-diphosphate. Phe34–Phe35 serves as a coordination point for orotate. Residues Tyr72–Lys73, Arg99, Lys100, Lys103, His105, and Asp124–Ala132 each bind 5-phospho-alpha-D-ribose 1-diphosphate. Residues Thr128 and Arg156 each contribute to the orotate site.

Belongs to the purine/pyrimidine phosphoribosyltransferase family. PyrE subfamily. In terms of assembly, homodimer. The cofactor is Mg(2+).

The enzyme catalyses orotidine 5'-phosphate + diphosphate = orotate + 5-phospho-alpha-D-ribose 1-diphosphate. It participates in pyrimidine metabolism; UMP biosynthesis via de novo pathway; UMP from orotate: step 1/2. Its function is as follows. Catalyzes the transfer of a ribosyl phosphate group from 5-phosphoribose 1-diphosphate to orotate, leading to the formation of orotidine monophosphate (OMP). This chain is Orotate phosphoribosyltransferase, found in Cellvibrio japonicus (strain Ueda107) (Pseudomonas fluorescens subsp. cellulosa).